The following is a 112-amino-acid chain: Colipase (112 aa).

The signal sequence occupies residues 1-17 (MEKVLILLLVALAVAYA). Residues 18 to 22 (VPDPR) constitute a propeptide, enterostatin, activation peptide. 5 disulfides stabilise this stretch: Cys-34–Cys-45, Cys-40–Cys-56, Cys-44–Cys-78, Cys-66–Cys-86, and Cys-80–Cys-104.

It belongs to the colipase family. In terms of assembly, forms a 1:1 stoichiometric complex with pancreatic lipase.

Its subcellular location is the secreted. Its function is as follows. Colipase is a cofactor of pancreatic lipase. It allows the lipase to anchor itself to the lipid-water interface. Without colipase the enzyme is washed off by bile salts, which have an inhibitory effect on the lipase. In terms of biological role, enterostatin has a biological activity as a satiety signal. The protein is Colipase (CLPS) of Bos taurus (Bovine).